Reading from the N-terminus, the 499-residue chain is Cysteine--tRNA ligase (499 aa).

C31 is a Zn(2+) binding site. The 'HIGH' region signature appears at 33–43 (VTVYDLCHLGH). Zn(2+) contacts are provided by C215, H240, and E244. Residues 272–276 (KMSKS) carry the 'KMSKS' region motif. An ATP-binding site is contributed by K275.

Belongs to the class-I aminoacyl-tRNA synthetase family. Monomer. Zn(2+) is required as a cofactor.

It is found in the cytoplasm. The enzyme catalyses tRNA(Cys) + L-cysteine + ATP = L-cysteinyl-tRNA(Cys) + AMP + diphosphate. The chain is Cysteine--tRNA ligase from Synechococcus sp. (strain WH7803).